The sequence spans 122 residues: Holo-[acyl-carrier-protein] synthase (122 aa).

Aspartate 9 and glutamate 58 together coordinate Mg(2+).

Belongs to the P-Pant transferase superfamily. AcpS family. The cofactor is Mg(2+).

It is found in the cytoplasm. The catalysed reaction is apo-[ACP] + CoA = holo-[ACP] + adenosine 3',5'-bisphosphate + H(+). In terms of biological role, transfers the 4'-phosphopantetheine moiety from coenzyme A to a Ser of acyl-carrier-protein. This chain is Holo-[acyl-carrier-protein] synthase, found in Chlamydia caviae (strain ATCC VR-813 / DSM 19441 / 03DC25 / GPIC) (Chlamydophila caviae).